The following is a 66-amino-acid chain: Large ribosomal subunit protein bL35 (66 aa).

Basic residues-rich tracts occupy residues 1 to 26 (MPKMKTHKGAAKRFKKTGSGKLKRSH) and 38 to 48 (QKQKRKLRKSA). A disordered region spans residues 1 to 48 (MPKMKTHKGAAKRFKKTGSGKLKRSHAFTSHLFANKSQKQKRKLRKSA).

Belongs to the bacterial ribosomal protein bL35 family.

The polypeptide is Large ribosomal subunit protein bL35 (Halalkalibacterium halodurans (strain ATCC BAA-125 / DSM 18197 / FERM 7344 / JCM 9153 / C-125) (Bacillus halodurans)).